Consider the following 352-residue polypeptide: UDP-N-acetylglucosamine--N-acetylmuramyl-(pentapeptide) pyrophosphoryl-undecaprenol N-acetylglucosamine transferase 2 (352 aa).

Residues 11-13 (SAG), Arg-164, Ser-194, and Gln-289 contribute to the UDP-N-acetyl-alpha-D-glucosamine site.

It belongs to the glycosyltransferase 28 family. MurG subfamily.

The protein resides in the cell membrane. It carries out the reaction di-trans,octa-cis-undecaprenyl diphospho-N-acetyl-alpha-D-muramoyl-L-alanyl-D-glutamyl-meso-2,6-diaminopimeloyl-D-alanyl-D-alanine + UDP-N-acetyl-alpha-D-glucosamine = di-trans,octa-cis-undecaprenyl diphospho-[N-acetyl-alpha-D-glucosaminyl-(1-&gt;4)]-N-acetyl-alpha-D-muramoyl-L-alanyl-D-glutamyl-meso-2,6-diaminopimeloyl-D-alanyl-D-alanine + UDP + H(+). It participates in cell wall biogenesis; peptidoglycan biosynthesis. Its function is as follows. Cell wall formation. Catalyzes the transfer of a GlcNAc subunit on undecaprenyl-pyrophosphoryl-MurNAc-pentapeptide (lipid intermediate I) to form undecaprenyl-pyrophosphoryl-MurNAc-(pentapeptide)GlcNAc (lipid intermediate II). The polypeptide is UDP-N-acetylglucosamine--N-acetylmuramyl-(pentapeptide) pyrophosphoryl-undecaprenol N-acetylglucosamine transferase 2 (Bacillus cereus (strain ATCC 10987 / NRS 248)).